Reading from the N-terminus, the 854-residue chain is Transcription factor asR3 (854 aa).

The segment at residues 19 to 45 (CWECRRRKIKCDRNDPCAHCIRHETQC) is a DNA-binding region (zn(2)-C6 fungal-type). The interval 56-156 (TDSDVSRTRP…SLSTNTSPSA (101 aa)) is disordered. 2 stretches are compositionally biased toward polar residues: residues 78–90 (ASGS…TRPS) and 125–145 (LNPS…SSRG). Positions 146-156 (PSLSTNTSPSA) are enriched in low complexity.

It is found in the nucleus. Functionally, transcription factor; part of the gene cluster that mediates the biosynthesis of xenovulene A, an unusual meroterpenoid that has potent inhibitory effects on the human gamma-aminobutyrate A (GABAA) benzodiazepine receptor. The sequence is that of Transcription factor asR3 from Sarocladium schorii (Acremonium strictum (strain IMI 501407)).